The primary structure comprises 256 residues: Deoxyribose-phosphate aldolase (256 aa).

The Proton donor/acceptor role is filled by D102. K165 (schiff-base intermediate with acetaldehyde) is an active-site residue. K197 acts as the Proton donor/acceptor in catalysis.

Belongs to the DeoC/FbaB aldolase family. DeoC type 2 subfamily.

Its subcellular location is the cytoplasm. It carries out the reaction 2-deoxy-D-ribose 5-phosphate = D-glyceraldehyde 3-phosphate + acetaldehyde. It participates in carbohydrate degradation; 2-deoxy-D-ribose 1-phosphate degradation; D-glyceraldehyde 3-phosphate and acetaldehyde from 2-deoxy-alpha-D-ribose 1-phosphate: step 2/2. Its function is as follows. Catalyzes a reversible aldol reaction between acetaldehyde and D-glyceraldehyde 3-phosphate to generate 2-deoxy-D-ribose 5-phosphate. The protein is Deoxyribose-phosphate aldolase of Shewanella baltica (strain OS223).